The chain runs to 715 residues: MFNQHKVEIEWGGRPLILETGKIARQADGAVLATYGETKVLATVVSMKEPKPGLDFFPLTVNYQEKTYAAGKIPGGYFKREGRPSEKETLVSRLIDRPIRPLFADGYKNDTQIVVTVVQHDLENDPDILSIVATSAALTLSGVPFMGPVGGARVGYINGEYVLNPHIDEMQESKLDLVVAGTADAVLMVESEAKELGEELMLGAVMFGHKGFQPVIDAIIKLAEVAAKEPRDFTAPDYSALEGEMLKIVGDELSNAYKITDKQQRYAAVDAVKAKVKAAFAPAEGEEPKYTSEQIGSVFKELQAKVVRWNILDTGSRIDGRDLKTVRKIVSEVGVLPRTHGSALFTRGETQALVVATLGTGEDEQYVDSLTGMYKEKFLLHYNFPPYSVGETGRMGSPGRREIGHGKLAWRAIRPMLPSADQFPYTLRVVSEITESNGSSSMATVCGTSLALMDAGVPLAKPVAGIAMGLIKEGERFAVLSDILGDEDHLGDMDFKVAGTANGITSLQMDIKIEGITEEIMKIALDQAKDGRQHILGEMAHALTGARPELGEFAPRIEVMHIPTDKIRDVIGSGGKVIREIVEKTGAKINIEDDGTVKIASSNAKEIEAAKKWIHTIVAEPEVGEIYEGTVVKTADFGAFVNFFGPRDGLVHISQLANERVAKTSDVVKEGDKVWVKLMGFDERGKVRLSMKVVDQATGKEIVRDKRAEGEEDAA.

Positions 488 and 494 each coordinate Mg(2+). The KH domain maps to 555 to 614; it reads PRIEVMHIPTDKIRDVIGSGGKVIREIVEKTGAKINIEDDGTVKIASSNAKEIEAAKKWI. Positions 624–692 constitute an S1 motif domain; sequence GEIYEGTVVK…ERGKVRLSMK (69 aa).

This sequence belongs to the polyribonucleotide nucleotidyltransferase family. Mg(2+) serves as cofactor.

It is found in the cytoplasm. It carries out the reaction RNA(n+1) + phosphate = RNA(n) + a ribonucleoside 5'-diphosphate. Its function is as follows. Involved in mRNA degradation. Catalyzes the phosphorolysis of single-stranded polyribonucleotides processively in the 3'- to 5'-direction. The polypeptide is Polyribonucleotide nucleotidyltransferase (Mesorhizobium japonicum (strain LMG 29417 / CECT 9101 / MAFF 303099) (Mesorhizobium loti (strain MAFF 303099))).